The chain runs to 283 residues: Thymidylate synthase (283 aa).

Position 22 (arginine 22) interacts with dUMP. Cysteine 160 acts as the Nucleophile in catalysis. Residues arginine 180 to aspartate 183, asparagine 191, and histidine 221 to tyrosine 223 contribute to the dUMP site. (6R)-5,10-methylene-5,6,7,8-tetrahydrofolate is bound at residue aspartate 183. Serine 282 is a (6R)-5,10-methylene-5,6,7,8-tetrahydrofolate binding site.

The protein belongs to the thymidylate synthase family. Bacterial-type ThyA subfamily. As to quaternary structure, homodimer.

It localises to the cytoplasm. The enzyme catalyses dUMP + (6R)-5,10-methylene-5,6,7,8-tetrahydrofolate = 7,8-dihydrofolate + dTMP. The protein operates within pyrimidine metabolism; dTTP biosynthesis. In terms of biological role, catalyzes the reductive methylation of 2'-deoxyuridine-5'-monophosphate (dUMP) to 2'-deoxythymidine-5'-monophosphate (dTMP) while utilizing 5,10-methylenetetrahydrofolate (mTHF) as the methyl donor and reductant in the reaction, yielding dihydrofolate (DHF) as a by-product. This enzymatic reaction provides an intracellular de novo source of dTMP, an essential precursor for DNA biosynthesis. The chain is Thymidylate synthase from Shewanella pealeana (strain ATCC 700345 / ANG-SQ1).